A 109-amino-acid polypeptide reads, in one-letter code: Phosphoribosyl-ATP pyrophosphatase (109 aa).

The protein belongs to the PRA-PH family.

Its subcellular location is the cytoplasm. It catalyses the reaction 1-(5-phospho-beta-D-ribosyl)-ATP + H2O = 1-(5-phospho-beta-D-ribosyl)-5'-AMP + diphosphate + H(+). The protein operates within amino-acid biosynthesis; L-histidine biosynthesis; L-histidine from 5-phospho-alpha-D-ribose 1-diphosphate: step 2/9. The protein is Phosphoribosyl-ATP pyrophosphatase of Alkalilimnicola ehrlichii (strain ATCC BAA-1101 / DSM 17681 / MLHE-1).